The primary structure comprises 199 residues: Inner membrane-spanning protein YciB (199 aa).

Helical transmembrane passes span 3–23, 47–67, 76–96, 119–139, and 149–169; these read LLIDFFPIILFFVAFKVWGIY, VEPMQWVSLGVIVLFGGATLL, WKPSVLYWLMGSALLIGQLVF, LNWSWAAFFAVMGALNLVIAY, and FKLFGGMGLMLVFVIGQAIYM. Positions 180–199 are disordered; it reads AAAATPDALPPPGVQQDKQP.

The protein belongs to the YciB family.

The protein resides in the cell inner membrane. In terms of biological role, plays a role in cell envelope biogenesis, maintenance of cell envelope integrity and membrane homeostasis. This Delftia acidovorans (strain DSM 14801 / SPH-1) protein is Inner membrane-spanning protein YciB.